Consider the following 474-residue polypeptide: Iroquois-class homeodomain protein irx-5 (474 aa).

The homeobox; TALE-type DNA-binding region spans 109–171; it reads DPAYRKNASR…NARRRLKKEN (63 aa). 3 disordered regions span residues 174–222, 252–294, and 453–474; these read TWTP…SPDG, ERNG…IQQL, and SQSQ…MSSI. The span at 182-199 shows a compositional bias: acidic residues; that stretch reads EDEDDDENIDLEKNEEDD. Residues 263–273 show a composition bias toward pro residues; it reads PPTPPLCPPDQ.

This sequence belongs to the TALE/IRO homeobox family. Early in gastrulation, expressed in cells beneath the blastopore lip. Subsequently expressed in the neural plate in overlapping patterns with other irx members, which all share an anterior border of expression. At the time of neural tube closure (stage 19) in regions of the midbrain, hindbrain, neural tube and optic vesicle, where expression continues during tailbud stages. In stage 34, expressed throughout the eye retina. Does not appear to be expressed in the developing heart or pronephros.

The protein resides in the nucleus. In terms of biological role, acts partially redundantly with other irx members in neural patterning. Required for formation of the posterior forebrain, midbrain, hindbrain, and to a lesser extent, spinal cord. Patterns the neuroectoderm in both the anterior/posterior and dorsal/ventral axes. Does not appear to play a role in pronephros kidney development. Involved in craniofacial and gonadal development. Modulates the migration of progenitor cell populations in branchial arches and gonads by repressing CXCL12. The polypeptide is Iroquois-class homeodomain protein irx-5 (irx5) (Xenopus laevis (African clawed frog)).